Consider the following 288-residue polypeptide: Transmembrane and coiled-coil domain-containing protein 5A (288 aa).

The stretch at 13 to 105 forms a coiled coil; that stretch reads IISLNMDLER…VHSISELQRK (93 aa). Residues 227–249 traverse the membrane as a helical segment; sequence SLLFSTLFFIRLLGYLIFHLSFI.

Testis-specific. Expressed in spermatogenic cells of testis but disappear by the time mature spermatozoa are formed (at protein level).

It localises to the endoplasmic reticulum membrane. The protein resides in the nucleus membrane. This Rattus norvegicus (Rat) protein is Transmembrane and coiled-coil domain-containing protein 5A (Tmco5a).